The sequence spans 182 residues: Large ribosomal subunit protein uL5c (182 aa).

This sequence belongs to the universal ribosomal protein uL5 family. In terms of assembly, part of the 50S ribosomal subunit; contacts the 5S rRNA.

The protein resides in the plastid. It is found in the chloroplast. Its function is as follows. Binds 5S rRNA, forms part of the central protuberance of the 50S subunit. The sequence is that of Large ribosomal subunit protein uL5c (rpl5) from Emiliania huxleyi (Coccolithophore).